The chain runs to 127 residues: Major sperm protein 19/31/40/45/50/51/53/59/61/65/81/113/142 (127 aa).

Alanine 2 is subject to N-acetylalanine. Residues 9-126 (DIQTQPGTKI…RRKNLPIEYN (118 aa)) form the MSP domain.

As to quaternary structure, helical subfilaments are built from MSP dimers; filaments are formed from two subfilaments coiling round one another; and filaments themselves supercoil to produce bundles. In terms of tissue distribution, sperm.

It localises to the cell projection. The protein resides in the pseudopodium. The protein localises to the cytoplasm. It is found in the cytoskeleton. In terms of biological role, central component in molecular interactions underlying sperm crawling. Forms an extensive filament system that extends from sperm villipoda, along the leading edge of the pseudopod. This chain is Major sperm protein 19/31/40/45/50/51/53/59/61/65/81/113/142 (msp-19), found in Caenorhabditis elegans.